Consider the following 361-residue polypeptide: Chorismate synthase (361 aa).

Positions 48 and 54 each coordinate NADP(+). Residues 131–133 (RSS), 243–244 (NA), glycine 287, 302–306 (KPTSS), and arginine 328 contribute to the FMN site.

This sequence belongs to the chorismate synthase family. In terms of assembly, homotetramer. It depends on FMNH2 as a cofactor.

The enzyme catalyses 5-O-(1-carboxyvinyl)-3-phosphoshikimate = chorismate + phosphate. The protein operates within metabolic intermediate biosynthesis; chorismate biosynthesis; chorismate from D-erythrose 4-phosphate and phosphoenolpyruvate: step 7/7. Its function is as follows. Catalyzes the anti-1,4-elimination of the C-3 phosphate and the C-6 proR hydrogen from 5-enolpyruvylshikimate-3-phosphate (EPSP) to yield chorismate, which is the branch point compound that serves as the starting substrate for the three terminal pathways of aromatic amino acid biosynthesis. This reaction introduces a second double bond into the aromatic ring system. The polypeptide is Chorismate synthase (Bradyrhizobium sp. (strain BTAi1 / ATCC BAA-1182)).